A 225-amino-acid polypeptide reads, in one-letter code: 7-cyano-7-deazaguanine synthase (225 aa).

10 to 20 (LSGGIDSATAA) is a binding site for ATP. Zn(2+) contacts are provided by Cys-191, Cys-199, Cys-202, and Cys-205.

It belongs to the QueC family. Zn(2+) is required as a cofactor.

The enzyme catalyses 7-carboxy-7-deazaguanine + NH4(+) + ATP = 7-cyano-7-deazaguanine + ADP + phosphate + H2O + H(+). It functions in the pathway purine metabolism; 7-cyano-7-deazaguanine biosynthesis. Catalyzes the ATP-dependent conversion of 7-carboxy-7-deazaguanine (CDG) to 7-cyano-7-deazaguanine (preQ(0)). The sequence is that of 7-cyano-7-deazaguanine synthase from Prochlorococcus marinus (strain NATL1A).